The primary structure comprises 300 residues: Ribosomal protein L11 methyltransferase (300 aa).

4 residues coordinate S-adenosyl-L-methionine: T152, G173, D195, and N234.

Belongs to the methyltransferase superfamily. PrmA family.

It localises to the cytoplasm. It catalyses the reaction L-lysyl-[protein] + 3 S-adenosyl-L-methionine = N(6),N(6),N(6)-trimethyl-L-lysyl-[protein] + 3 S-adenosyl-L-homocysteine + 3 H(+). In terms of biological role, methylates ribosomal protein L11. The chain is Ribosomal protein L11 methyltransferase from Paraburkholderia phytofirmans (strain DSM 17436 / LMG 22146 / PsJN) (Burkholderia phytofirmans).